Consider the following 329-residue polypeptide: Transmembrane protein I329L (329 aa).

A signal peptide spans Met-1 to Lys-31. 9 N-linked (GlcNAc...) asparagine; by host glycosylation sites follow: Asn-32, Asn-39, Asn-44, Asn-58, Asn-76, Asn-82, Asn-101, Asn-185, and Asn-219. Residues Asn-32–Pro-239 lie on the Extracellular side of the membrane. The helical transmembrane segment at Phe-240–Leu-260 threads the bilayer. Residues Arg-261–Lys-329 lie on the Cytoplasmic side of the membrane.

It belongs to the asfivirus I329L family. Highly glycosylated.

It is found in the host endoplasmic reticulum membrane. It localises to the host Golgi apparatus membrane. In terms of biological role, viral TLR3 homolog that probably prevents TLR3 dimerization and subsequent induction of IFN. Inhibits dsRNA-stimulated activation of NF-kB and IRF3. The sequence is that of Transmembrane protein I329L from Ornithodoros (relapsing fever ticks).